The sequence spans 76 residues: Conotoxin Vc6.3 (76 aa).

A signal peptide spans M1–A22. Positions D23 to E50 are excised as a propeptide. Cystine bridges form between C52/C66, C59/C70, and C67/C75.

The protein belongs to the conotoxin O1 superfamily. Expressed by the venom duct.

Its subcellular location is the secreted. The protein is Conotoxin Vc6.3 of Conus victoriae (Queen Victoria cone).